Here is a 103-residue protein sequence, read N- to C-terminus: Phosphoribosyl-ATP pyrophosphatase (103 aa).

It belongs to the PRA-PH family.

The protein localises to the cytoplasm. The catalysed reaction is 1-(5-phospho-beta-D-ribosyl)-ATP + H2O = 1-(5-phospho-beta-D-ribosyl)-5'-AMP + diphosphate + H(+). Its pathway is amino-acid biosynthesis; L-histidine biosynthesis; L-histidine from 5-phospho-alpha-D-ribose 1-diphosphate: step 2/9. This chain is Phosphoribosyl-ATP pyrophosphatase (hisE), found in Cereibacter sphaeroides (strain ATCC 17023 / DSM 158 / JCM 6121 / CCUG 31486 / LMG 2827 / NBRC 12203 / NCIMB 8253 / ATH 2.4.1.) (Rhodobacter sphaeroides).